The chain runs to 364 residues: Palmitoyltransferase ZDHHC9 (364 aa).

Topologically, residues 1 to 35 are cytoplasmic; that stretch reads MSVMVVRKKVTRKWEKLPGRNTFCCDGRVMMARQK. A helical transmembrane segment spans residues 36–56; that stretch reads GIFYLTLFLILGTCTLFFAFE. Residues 57 to 63 are Lumenal-facing; it reads CRYLAVQ. The helical transmembrane segment at 64–84 threads the bilayer; sequence LSPAIPVFAAMLFLFSMATLL. Topologically, residues 85–183 are cytoplasmic; sequence RTSFSDPGVI…NCVGKRNYRY (99 aa). Residues 139–189 form the DHHC domain; the sequence is KYCYTCKIFRPPRASHCSICDNCVERFDHHCPWVGNCVGKRNYRYFYLFIL. Catalysis depends on Cys169, which acts as the S-palmitoyl cysteine intermediate. Residues 184–204 form a helical membrane-spanning segment; that stretch reads FYLFILSLSLLTIYVFAFNIV. At 205-228 the chain is on the lumenal side; it reads YVALKSLKIGFLETLKETPGTVLE. The chain crosses the membrane as a helical span at residues 229–249; sequence VLICFFTLWSVVGLTGFHTFL. Residues 250-364 are Cytoplasmic-facing; sequence VALNQTTNED…PPQEASEAEK (115 aa). The tract at residues 303–364 is disordered; it reads PLEESGSRPP…PPQEASEAEK (62 aa). Positions 310-336 are enriched in polar residues; the sequence is RPPSTQETSSSLLPQSPASTEHMNSNE. The segment covering 346-356 has biased composition (pro residues); the sequence is EMPPPEPPEPP.

It belongs to the DHHC palmitoyltransferase family. ERF2/ZDHHC9 subfamily. As to quaternary structure, interacts with GOLGA7.

The protein resides in the endoplasmic reticulum membrane. It localises to the golgi apparatus membrane. It carries out the reaction L-cysteinyl-[protein] + hexadecanoyl-CoA = S-hexadecanoyl-L-cysteinyl-[protein] + CoA. Functionally, palmitoyltransferase that catalyzes the addition of palmitate onto various protein substrates, such as ADRB2, GSDMD, HRAS, NRAS and CGAS. The ZDHHC9-GOLGA7 complex is a palmitoyltransferase specific for HRAS and NRAS. May have a palmitoyltransferase activity toward the beta-2 adrenergic receptor/ADRB2 and therefore regulate G protein-coupled receptor signaling. Acts as a regulator of innate immunity by catalyzing palmitoylation of CGAS, thereby promoting CGAS homodimerization and cyclic GMP-AMP synthase activity. Activates pyroptosis by catalyzing palmitoylation of gasdermin-D (GSDMD), thereby promoting membrane translocation and pore formation of GSDMD. This chain is Palmitoyltransferase ZDHHC9 (Zdhhc9), found in Mus musculus (Mouse).